The chain runs to 113 residues: Nitrogenase vanadium-iron protein delta chain (113 aa).

Hexamer of two alpha, two beta, and two delta chains. Requires iron-sulfur cluster as cofactor. Vanadium cation serves as cofactor.

It catalyses the reaction N2 + 8 reduced [2Fe-2S]-[ferredoxin] + 16 ATP + 16 H2O = H2 + 8 oxidized [2Fe-2S]-[ferredoxin] + 2 NH4(+) + 16 ADP + 16 phosphate + 6 H(+). Its function is as follows. The key enzymatic reactions in nitrogen fixation are catalyzed by the nitrogenase complex, which has 2 components: the iron protein (component 2) and a component 1 which is either a molybdenum-iron protein, a vanadium-iron, or an iron-iron protein. The protein is Nitrogenase vanadium-iron protein delta chain (vnfG) of Azotobacter salinestris.